We begin with the raw amino-acid sequence, 170 residues long: Cathelicidin antimicrobial peptide (170 aa).

An N-terminal signal peptide occupies residues 1–30 (MDTQRDSPSLGRWSLVLLLLGLVMPLAIVA). The propeptide at 31–131 (QVLSYQEAVL…DISCDKDNRR (101 aa)) is cathelin-like domain (CLD). 2 disulfide bridges follow: C86–C97 and C108–C125. Residues 150 to 162 (FKRIVQRIKDFLQ) form an active core region.

Belongs to the cathelicidin family. Monomer, homodimer or homotrimer (in vitro). Oligomerizes as tetra- or hexamer in solution (in vitro). In terms of processing, proteolytically cleaved by proteinase PRTN3 into antibacterial peptide LL-37. Proteolytically cleaved by cathepsin CTSG and neutrophil elastase ELANE. Resistant to proteolytic degradation in solution, and when bound to both zwitterionic (mimicking mammalian membranes) and negatively charged membranes (mimicking bacterial membranes). Post-translationally, after secretion onto the skin surface, the CAMP gene product is processed by a serine protease-dependent mechanism into multiple novel antimicrobial peptides distinct from and shorter than cathelicidin LL-37. These peptides show enhanced antimicrobial action, acquiring the ability to kill skin pathogens such as S.aureus, E.coli and C.albicans. These peptides have lost the ability to stimulate CXCL8/IL8 release from keratinocytes. The peptides act synergistically, killing bacteria at lower concentrations when present together, and maintain activity at increased salt condition.

The protein localises to the secreted. It is found in the vesicle. Its function is as follows. Antimicrobial protein that is an integral component of the innate immune system. Binds to bacterial lipopolysaccharides (LPS). Acts via neutrophil N-formyl peptide receptors to enhance the release of CXCL2. Postsecretory processing generates multiple cathelicidin antimicrobial peptides with various lengths which act as a topical antimicrobial defense in sweat on skin. The unprocessed precursor form, cathelicidin antimicrobial peptide, inhibits the growth of Gram-negative E.coli and E.aerogenes with efficiencies comparable to that of the mature peptide LL-37 (in vitro). In terms of biological role, antimicrobial peptide that is an integral component of the innate immune system. Binds to bacterial lipopolysaccharides (LPS). Causes membrane permeabilization by forming transmembrane pores (in vitro). Causes lysis of E.coli. Exhibits antimicrobial activity against Gram-negative bacteria such as P.aeruginosa, S.typhimurium, E.aerogenes, E.coli and P.syringae, Gram-positive bacteria such as L.monocytogenes, S.epidermidis, S.pyogenes and S.aureus, as well as vancomycin-resistant enterococci (in vitro). Exhibits antimicrobial activity against methicillin-resistant S.aureus, P.mirabilis, and C.albicans in low-salt media, but not in media containing 100 mM NaCl (in vitro). Forms chiral supramolecular assemblies with quinolone signal (PQS) molecules of P.aeruginosa, which may lead to interference of bacterial quorum signaling and perturbance of bacterial biofilm formation. May form supramolecular fiber-like assemblies on bacterial membranes. Induces cytokine and chemokine producation as well as TNF/TNFA and CSF2/GMCSF production in normal human keratinocytes. Exhibits hemolytic activity against red blood cells. Exhibits antimicrobial activity against E.coli and B.megaterium (in vitro). The protein is Cathelicidin antimicrobial peptide of Nomascus leucogenys (Northern white-cheeked gibbon).